Consider the following 200-residue polypeptide: Holliday junction branch migration complex subunit RuvA (200 aa).

The interval 1 to 64 is domain I; that stretch reads MYAYFRGRLV…EDALQLYGFA (64 aa). The interval 65–143 is domain II; the sequence is TEEEKQLFRL…KLAPVGSAVA (79 aa). Residues 144 to 154 are flexible linker; that stretch reads SVAADRGGFRE. Positions 154-200 are domain III; the sequence is EDAVNALMTLGFPRPVANQAVGCALEPEPDASLEVVIKRALATMHNR.

It belongs to the RuvA family. In terms of assembly, homotetramer. Forms an RuvA(8)-RuvB(12)-Holliday junction (HJ) complex. HJ DNA is sandwiched between 2 RuvA tetramers; dsDNA enters through RuvA and exits via RuvB. An RuvB hexamer assembles on each DNA strand where it exits the tetramer. Each RuvB hexamer is contacted by two RuvA subunits (via domain III) on 2 adjacent RuvB subunits; this complex drives branch migration. In the full resolvosome a probable DNA-RuvA(4)-RuvB(12)-RuvC(2) complex forms which resolves the HJ.

It localises to the cytoplasm. Functionally, the RuvA-RuvB-RuvC complex processes Holliday junction (HJ) DNA during genetic recombination and DNA repair, while the RuvA-RuvB complex plays an important role in the rescue of blocked DNA replication forks via replication fork reversal (RFR). RuvA specifically binds to HJ cruciform DNA, conferring on it an open structure. The RuvB hexamer acts as an ATP-dependent pump, pulling dsDNA into and through the RuvAB complex. HJ branch migration allows RuvC to scan DNA until it finds its consensus sequence, where it cleaves and resolves the cruciform DNA. The chain is Holliday junction branch migration complex subunit RuvA from Chlorobium phaeovibrioides (strain DSM 265 / 1930) (Prosthecochloris vibrioformis (strain DSM 265)).